The following is an 819-amino-acid chain: Outer membrane usher protein CssD (819 aa).

The protein belongs to the fimbrial export usher family.

The protein localises to the cell outer membrane. Functionally, involved in the export and assembly of C6 fimbrial subunits across the outer membrane. In Escherichia coli, this protein is Outer membrane usher protein CssD (cssD).